A 327-amino-acid chain; its full sequence is Methionyl-tRNA formyltransferase (327 aa).

Residue 121–124 participates in (6S)-5,6,7,8-tetrahydrofolate binding; it reads SLLP.

This sequence belongs to the Fmt family.

The catalysed reaction is L-methionyl-tRNA(fMet) + (6R)-10-formyltetrahydrofolate = N-formyl-L-methionyl-tRNA(fMet) + (6S)-5,6,7,8-tetrahydrofolate + H(+). Attaches a formyl group to the free amino group of methionyl-tRNA(fMet). The formyl group appears to play a dual role in the initiator identity of N-formylmethionyl-tRNA by promoting its recognition by IF2 and preventing the misappropriation of this tRNA by the elongation apparatus. This is Methionyl-tRNA formyltransferase from Burkholderia pseudomallei (strain 1710b).